The primary structure comprises 294 residues: N-acetylmuramic acid 6-phosphate etherase (294 aa).

Positions 54–217 (VIKSFEEEGR…STASMIGVGK (164 aa)) constitute an SIS domain. E82 (proton donor) is an active-site residue. E113 is an active-site residue.

Belongs to the GCKR-like family. MurNAc-6-P etherase subfamily. In terms of assembly, homodimer.

The catalysed reaction is N-acetyl-D-muramate 6-phosphate + H2O = N-acetyl-D-glucosamine 6-phosphate + (R)-lactate. It participates in amino-sugar metabolism; N-acetylmuramate degradation. Functionally, specifically catalyzes the cleavage of the D-lactyl ether substituent of MurNAc 6-phosphate, producing GlcNAc 6-phosphate and D-lactate. The polypeptide is N-acetylmuramic acid 6-phosphate etherase (Bacillus cereus (strain AH187)).